A 747-amino-acid polypeptide reads, in one-letter code: Pentatricopeptide repeat-containing protein At5g39710 (747 aa).

15 PPR repeats span residues 133–167, 168–203, 204–238, 239–273, 274–308, 309–343, 344–378, 379–413, 414–448, 449–483, 484–518, 519–553, 554–588, 604–638, and 639–673; these read TSSVFDLVVKSYSRLSLIDKALSIVHLAQAHGFMP, GVLSYNAVLDATIRSKRNISFAENVFKEMLESQVSP, NVFTYNILIRGFCFAGNIDVALTLFDKMETKGCLP, NVVTYNTLIDGYCKLRKIDDGFKLLRSMALKGLEP, NLISYNVVINGLCREGRMKEVSFVLTEMNRRGYSL, DEVTYNTLIKGYCKEGNFHQALVMHAEMLRHGLTP, SVITYTSLIHSMCKAGNMNRAMEFLDQMRVRGLCP, NERTYTTLVDGFSQKGYMNEAYRVLREMNDNGFSP, SVVTYNALINGHCVTGKMEDAIAVLEDMKEKGLSP, DVVSYSTVLSGFCRSYDVDEALRVKREMVEKGIKP, DTITYSSLIQGFCEQRRTKEACDLYEEMLRVGLPP, DEFTYTALINAYCMEGDLEKALQLHNEMVEKGVLP, DVVTYSVLINGLNKQSRTREAKRLLLKLFYEESVP, EFKSVVSLIKGFCMKGMMTEADQVFESMLGKNHKP, and DGTAYNIMIHGHCRAGDIRKAYTLYKEMVKSGFLL.

It belongs to the PPR family. P subfamily.

The protein is Pentatricopeptide repeat-containing protein At5g39710 (EMB2745) of Arabidopsis thaliana (Mouse-ear cress).